We begin with the raw amino-acid sequence, 252 residues long: Imidazole glycerol phosphate synthase subunit HisF (252 aa).

Catalysis depends on residues aspartate 11 and aspartate 130.

The protein belongs to the HisA/HisF family. In terms of assembly, heterodimer of HisH and HisF.

The protein resides in the cytoplasm. It catalyses the reaction 5-[(5-phospho-1-deoxy-D-ribulos-1-ylimino)methylamino]-1-(5-phospho-beta-D-ribosyl)imidazole-4-carboxamide + L-glutamine = D-erythro-1-(imidazol-4-yl)glycerol 3-phosphate + 5-amino-1-(5-phospho-beta-D-ribosyl)imidazole-4-carboxamide + L-glutamate + H(+). It participates in amino-acid biosynthesis; L-histidine biosynthesis; L-histidine from 5-phospho-alpha-D-ribose 1-diphosphate: step 5/9. IGPS catalyzes the conversion of PRFAR and glutamine to IGP, AICAR and glutamate. The HisF subunit catalyzes the cyclization activity that produces IGP and AICAR from PRFAR using the ammonia provided by the HisH subunit. The protein is Imidazole glycerol phosphate synthase subunit HisF of Bacillus cereus (strain AH187).